Here is a 137-residue protein sequence, read N- to C-terminus: Small ribosomal subunit protein uS12 (137 aa).

Disordered regions lie at residues 1–21 (MPTI…KSDS) and 34–57 (VHTK…TPKK). D102 is modified (3-methylthioaspartic acid).

This sequence belongs to the universal ribosomal protein uS12 family. In terms of assembly, part of the 30S ribosomal subunit. Contacts proteins S8 and S17. May interact with IF1 in the 30S initiation complex.

With S4 and S5 plays an important role in translational accuracy. In terms of biological role, interacts with and stabilizes bases of the 16S rRNA that are involved in tRNA selection in the A site and with the mRNA backbone. Located at the interface of the 30S and 50S subunits, it traverses the body of the 30S subunit contacting proteins on the other side and probably holding the rRNA structure together. The combined cluster of proteins S8, S12 and S17 appears to hold together the shoulder and platform of the 30S subunit. This is Small ribosomal subunit protein uS12 from Streptococcus uberis (strain ATCC BAA-854 / 0140J).